We begin with the raw amino-acid sequence, 480 residues long: NADH-quinone oxidoreductase subunit N (480 aa).

13 helical membrane-spanning segments follow: residues 10–30 (FISIGPLLIVLMTALIIILIE), 40–60 (WSSLISIGGLTLSIFAVWGGI), 80–100 (FFTVFFLVIGIGASLLATAFF), 117–137 (AVFGLILIGAAADLLTLFLGI), 166–186 (LMGSIVAGFLLYGIALVYGAI), 208–228 (VLFFSGIAMITLGLAFKAALV), 246–266 (TAFMAVGTKVGVFAAFVRLFF), 276–296 (WNQVIDTLVYATLIYANFVAL), 304–324 (FFAYSSISHAGFLMIPVVIGN), 330–350 (ALTFYLVIYAIATFGCFAVLA), 374–394 (LASLLSICLLTLAGIPPTAGF), 409–431 (YYGLVIVGLLTTILSSYYYLRII), and 452–472 (IVGTTSFIAIIILSFYPAPFL).

It belongs to the complex I subunit 2 family. In terms of assembly, NDH-1 is composed of 14 different subunits. Subunits NuoA, H, J, K, L, M, N constitute the membrane sector of the complex.

It is found in the cell inner membrane. It carries out the reaction a quinone + NADH + 5 H(+)(in) = a quinol + NAD(+) + 4 H(+)(out). Functionally, NDH-1 shuttles electrons from NADH, via FMN and iron-sulfur (Fe-S) centers, to quinones in the respiratory chain. The immediate electron acceptor for the enzyme in this species is believed to be ubiquinone. Couples the redox reaction to proton translocation (for every two electrons transferred, four hydrogen ions are translocated across the cytoplasmic membrane), and thus conserves the redox energy in a proton gradient. The polypeptide is NADH-quinone oxidoreductase subunit N (Protochlamydia amoebophila (strain UWE25)).